The sequence spans 820 residues: Cell division control protein 48 homolog C (820 aa).

Disordered stretches follow at residues 72–157 (RVKD…RFDL) and 169–188 (LNSSSKKPIGSPAEKNVEVE). The span at 76–87 (EDEDDNIGDEEG) shows a compositional bias: acidic residues. A coiled-coil region spans residues 85 to 122 (EEGSASQRKKQRRVDEKEEKLQRAEQSHLRKRNMERSV). Positions 97 to 119 (RVDEKEEKLQRAEQSHLRKRNME) are enriched in basic and acidic residues. Residues 121–142 (SVSSSPSSSSSSEDSGDVSTSE) are compositionally biased toward low complexity. Residues 274–281 (GPPGCGKT) and 569–576 (GPPGCGKT) contribute to the ATP site.

The protein belongs to the AAA ATPase family.

The protein resides in the nucleus. It localises to the cytoplasm. Its subcellular location is the cytoskeleton. The protein localises to the phragmoplast. Its function is as follows. Probably functions in cell division and growth processes. Interacts with certain SNAREs as part of specialized membrane fusion events where vesicles from the same organelle fuse (homotypic fusion). The chain is Cell division control protein 48 homolog C (CDC48C) from Arabidopsis thaliana (Mouse-ear cress).